Here is a 196-residue protein sequence, read N- to C-terminus: Holliday junction branch migration complex subunit RuvA (196 aa).

Residues 1 to 63 (MINKIYGKIV…DDDVKLFGFL (63 aa)) are domain I. Residues 64 to 142 (NISEREVFEN…KGDESSSYML (79 aa)) form a domain II region. A region of interest (flexible linker) is located at residue K143. A domain III region spans residues 143–196 (KFKELEQSIVNMGFDRKLVVVAFREIMLSDKFLILKEAEQEQFLFTETLKRLSV).

The protein belongs to the RuvA family. Homotetramer. Forms an RuvA(8)-RuvB(12)-Holliday junction (HJ) complex. HJ DNA is sandwiched between 2 RuvA tetramers; dsDNA enters through RuvA and exits via RuvB. An RuvB hexamer assembles on each DNA strand where it exits the tetramer. Each RuvB hexamer is contacted by two RuvA subunits (via domain III) on 2 adjacent RuvB subunits; this complex drives branch migration. In the full resolvosome a probable DNA-RuvA(4)-RuvB(12)-RuvC(2) complex forms which resolves the HJ.

The protein resides in the cytoplasm. Its function is as follows. The RuvA-RuvB-RuvC complex processes Holliday junction (HJ) DNA during genetic recombination and DNA repair, while the RuvA-RuvB complex plays an important role in the rescue of blocked DNA replication forks via replication fork reversal (RFR). RuvA specifically binds to HJ cruciform DNA, conferring on it an open structure. The RuvB hexamer acts as an ATP-dependent pump, pulling dsDNA into and through the RuvAB complex. HJ branch migration allows RuvC to scan DNA until it finds its consensus sequence, where it cleaves and resolves the cruciform DNA. In Borrelia recurrentis (strain A1), this protein is Holliday junction branch migration complex subunit RuvA.